A 391-amino-acid chain; its full sequence is Mycofactocin maturase MftC (391 aa).

The Radical SAM core domain maps to 16–232 (LDAPICLTWE…KGERVLTGDS (217 aa)). Positions 30, 34, 37, 251, 258, 269, 310, 313, 319, 323, and 341 each coordinate [4Fe-4S] cluster. The segment at 340-391 (ECVQGHSEPALARERHLPRPRADHSRGRRVSKPVPLTLSMRPPKRPCNESPV) is disordered. The segment covering 350-364 (LARERHLPRPRADHS) has biased composition (basic and acidic residues).

Belongs to the radical SAM superfamily. Requires [4Fe-4S] cluster as cofactor.

It catalyses the reaction [mycofactocin precursor peptide]-C-terminal glycyl-L-valyl-L-tyrosine + S-adenosyl-L-methionine = [mycofactocin precursor peptide]-C-terminal glycyl-N-{[2-(4-hydroxyphenyl)ethenyl]-3-methylbutanamide} + 5'-deoxyadenosine + L-methionine + CO2. It carries out the reaction [mycofactocin precursor peptide]-C-terminal glycyl-N-{[2-(4-hydroxyphenyl)ethenyl]-3-methylbutanamide} + AH2 + S-adenosyl-L-methionine = [mycofactocin precursor peptide]-C-terminal glycyl-N-{5-[(4-hydroxyphenyl)methyl]-4,4-dimethyl-2-oxopyrrolidin-3-yl}acetamide + 5'-deoxyadenosine + L-methionine + A + H(+). Radical S-adenosylmethionine (SAM) enzyme responsible for the first step of the biosynthesis of the enzyme cofactor mycofactocin (MFT). Catalyzes two reactions at the C-terminus of the mycofactocin precursor (the MftA peptide). The first one is the oxidative decarboxylation of the C-terminal L-tyrosine of MftA, forming an unsaturated tyramine moiety. The second reaction is the cross-linking of the tyramine with the penultimate L-valine residue, forming a five-membered lactam ring. Its activity requires the presence of the MftB chaperone. In Mycobacterium tuberculosis (strain CDC 1551 / Oshkosh), this protein is Mycofactocin maturase MftC (mftC).